Reading from the N-terminus, the 124-residue chain is UPF0292 protein AF_0905 (124 aa).

The Toprim domain occupies 21–98; the sequence is GWVVVVEGKK…IPDVEIKRKI (78 aa). Residues glutamate 27, aspartate 67, and aspartate 69 each contribute to the Mg(2+) site.

This sequence belongs to the UPF0292 family. Mg(2+) serves as cofactor.

This Archaeoglobus fulgidus (strain ATCC 49558 / DSM 4304 / JCM 9628 / NBRC 100126 / VC-16) protein is UPF0292 protein AF_0905.